Here is a 390-residue protein sequence, read N- to C-terminus: S-adenosylmethionine synthase 3 (390 aa).

Mg(2+) is bound at residue Glu-9. His-15 contacts ATP. Glu-43 provides a ligand contact to K(+). L-methionine contacts are provided by Glu-56 and Gln-99. ATP-binding positions include 167–169 (DGK), 235–238 (SGRF), Asp-246, 252–253 (RK), Ala-269, Lys-273, and Lys-277. L-methionine is bound at residue Asp-246. Residue Lys-277 participates in L-methionine binding.

It belongs to the AdoMet synthase family. As to quaternary structure, homotetramer. Mn(2+) serves as cofactor. The cofactor is Mg(2+). It depends on Co(2+) as a cofactor. Requires K(+) as cofactor. As to expression, mostly expressed in stems and leaves.

Its subcellular location is the cytoplasm. It catalyses the reaction L-methionine + ATP + H2O = S-adenosyl-L-methionine + phosphate + diphosphate. It participates in amino-acid biosynthesis; S-adenosyl-L-methionine biosynthesis; S-adenosyl-L-methionine from L-methionine: step 1/1. Its function is as follows. Catalyzes the formation of S-adenosylmethionine from methionine and ATP. The reaction comprises two steps that are both catalyzed by the same enzyme: formation of S-adenosylmethionine (AdoMet) and triphosphate, and subsequent hydrolysis of the triphosphate. In Solanum lycopersicum (Tomato), this protein is S-adenosylmethionine synthase 3 (SAM3).